Reading from the N-terminus, the 140-residue chain is Ribonuclease P protein subunit p20 (140 aa).

It belongs to the histone-like Alba family. In terms of assembly, component of nuclear RNase P and RNase MRP complexes. RNase P consists of a catalytic RNA moiety and 10 different protein chains; POP1, POP4, POP5, POP7, RPP14, RPP21, RPP25, RPP30, RPP38 and RPP40. Within the RNase P complex, POP1, POP7 and RPP25 form the 'finger' subcomplex, POP5, RPP14, RPP40 and homodimeric RPP30 form the 'palm' subcomplex, and RPP21, POP4 and RPP38 form the 'wrist' subcomplex. All subunits of the RNase P complex interact with the catalytic RNA. Several subunits of RNase P are also part of the RNase MRP complex. RNase MRP consists of a catalytic RNA moiety and about 8 protein subunits; POP1, POP7, RPP25, RPP30, RPP38, RPP40 and possibly also POP4 and POP5. Interacts with SMN1. POP7 forms a heterodimer with RPP25 that binds to the P3 stem loop of the catalytic RNA.

It localises to the nucleus. Its subcellular location is the nucleolus. It is found in the cytoplasm. The protein localises to the cytoplasmic granule. Component of ribonuclease P, a ribonucleoprotein complex that generates mature tRNA molecules by cleaving their 5'-ends. Also a component of the MRP ribonuclease complex, which cleaves pre-rRNA sequences. This chain is Ribonuclease P protein subunit p20 (POP7), found in Bos taurus (Bovine).